Reading from the N-terminus, the 134-residue chain is Cytochrome b5 isoform E (134 aa).

In terms of domain architecture, Cytochrome b5 heme-binding spans 5–81 (RKVLSFEEVS…MDKYFIGEID (77 aa)). Positions 40 and 64 each coordinate heme. The helical transmembrane segment at 107–127 (FIIKILQFLVPILILGLALVV) threads the bilayer. The AKR2A-binding sequence (ABS) required for endoplasmic reticulum membrane targeting motif lies at 128 to 134 (RHYTKKD).

This sequence belongs to the cytochrome b5 family. Interacts with CER1, BI-1, FAH1 and FAH2. Interacts with AKR2A. In terms of tissue distribution, expressed in roots, stems, leaves, flowers and siliques.

Its subcellular location is the cell membrane. It is found in the endoplasmic reticulum membrane. Its function is as follows. Membrane bound hemoprotein which function as an electron carrier for several membrane bound oxygenases, including fatty acid desaturases. The polypeptide is Cytochrome b5 isoform E (CYTB5-E) (Arabidopsis thaliana (Mouse-ear cress)).